Here is a 341-residue protein sequence, read N- to C-terminus: GTPase Obg (341 aa).

In terms of domain architecture, Obg spans 2 to 160; it reads SGFIDEVPIQ…FSLILELKLL (159 aa). The OBG-type G domain occupies 161–330; it reads ADIGIVGLPN…LLERIDKVFF (170 aa). GTP-binding positions include 167–174, 192–196, 215–218, 282–285, and 311–313; these read GLPNAGKS, FTTLS, DIPG, NKMD, and SAD. Mg(2+) is bound by residues S174 and T194.

It belongs to the TRAFAC class OBG-HflX-like GTPase superfamily. OBG GTPase family. Monomer. Mg(2+) is required as a cofactor.

It is found in the cytoplasm. Its function is as follows. An essential GTPase which binds GTP, GDP and possibly (p)ppGpp with moderate affinity, with high nucleotide exchange rates and a fairly low GTP hydrolysis rate. Plays a role in control of the cell cycle, stress response, ribosome biogenesis and in those bacteria that undergo differentiation, in morphogenesis control. This Leptospira biflexa serovar Patoc (strain Patoc 1 / Ames) protein is GTPase Obg.